We begin with the raw amino-acid sequence, 158 residues long: Transcriptional repressor NrdR (158 aa).

Residues 1 to 20 (MRCPYCQSEDTQVKDSRPAE) are disordered. A zinc finger spans residues 3-34 (CPYCQSEDTQVKDSRPAEDGAVIRRRRVCSVC). The segment covering 11–20 (TQVKDSRPAE) has biased composition (basic and acidic residues). In terms of domain architecture, ATP-cone spans 49–139 (LMVVKKSGRR…VYRNFSKAVD (91 aa)).

Belongs to the NrdR family. Requires Zn(2+) as cofactor.

Functionally, negatively regulates transcription of bacterial ribonucleotide reductase nrd genes and operons by binding to NrdR-boxes. This is Transcriptional repressor NrdR from Brucella anthropi (strain ATCC 49188 / DSM 6882 / CCUG 24695 / JCM 21032 / LMG 3331 / NBRC 15819 / NCTC 12168 / Alc 37) (Ochrobactrum anthropi).